The chain runs to 394 residues: S-adenosylmethionine synthase (394 aa).

ATP is bound at residue His16. Asp18 serves as a coordination point for Mg(2+). Position 44 (Glu44) interacts with K(+). Positions 57 and 100 each coordinate L-methionine. The segment at 100-110 (QSPDIAQGVDA) is flexible loop. ATP-binding positions include 172 to 174 (DAK), 239 to 240 (RF), Asp248, 254 to 255 (RK), Ala271, and Lys275. An L-methionine-binding site is contributed by Asp248. Lys279 serves as a coordination point for L-methionine.

The protein belongs to the AdoMet synthase family. As to quaternary structure, homotetramer; dimer of dimers. Mg(2+) serves as cofactor. The cofactor is K(+).

The protein resides in the cytoplasm. The enzyme catalyses L-methionine + ATP + H2O = S-adenosyl-L-methionine + phosphate + diphosphate. It participates in amino-acid biosynthesis; S-adenosyl-L-methionine biosynthesis; S-adenosyl-L-methionine from L-methionine: step 1/1. In terms of biological role, catalyzes the formation of S-adenosylmethionine (AdoMet) from methionine and ATP. The overall synthetic reaction is composed of two sequential steps, AdoMet formation and the subsequent tripolyphosphate hydrolysis which occurs prior to release of AdoMet from the enzyme. The chain is S-adenosylmethionine synthase from Enterococcus faecalis (strain ATCC 700802 / V583).